Reading from the N-terminus, the 207-residue chain is Guanylate kinase (207 aa).

Residues 4–184 enclose the Guanylate kinase-like domain; sequence GILFIISAPS…AVNDLITIIT (181 aa). 11–18 contributes to the ATP binding site; it reads APSGTGKS.

Belongs to the guanylate kinase family.

It localises to the cytoplasm. The enzyme catalyses GMP + ATP = GDP + ADP. Essential for recycling GMP and indirectly, cGMP. This Buchnera aphidicola subsp. Acyrthosiphon pisum (strain APS) (Acyrthosiphon pisum symbiotic bacterium) protein is Guanylate kinase (gmk).